The following is a 147-amino-acid chain: Large ribosomal subunit protein uL13 (147 aa).

Belongs to the universal ribosomal protein uL13 family. Part of the 50S ribosomal subunit.

Functionally, this protein is one of the early assembly proteins of the 50S ribosomal subunit, although it is not seen to bind rRNA by itself. It is important during the early stages of 50S assembly. The protein is Large ribosomal subunit protein uL13 of Nocardia farcinica (strain IFM 10152).